The following is a 231-amino-acid chain: Membrane protein YknW (231 aa).

Transmembrane regions (helical) follow at residues 38–58 (VWGP…LQSL), 93–113 (GAII…WLCV), 128–148 (LSLF…IVAF), 171–191 (LASV…LLAI), and 205–225 (WISA…SGLI).

In terms of assembly, interacts with a complex composed of YknX, YknY and YknZ.

The protein localises to the cell membrane. In terms of biological role, part of an unusual four-component transporter, which is required for protection against the killing factor SdpC (sporulation-delaying protein). Has a role in the assembly of the YknXYZ complex. This Bacillus subtilis (strain 168) protein is Membrane protein YknW (yknW).